We begin with the raw amino-acid sequence, 813 residues long: Serine/threonine-protein kinase kin-29 (813 aa).

Residues 18 to 269 enclose the Protein kinase domain; the sequence is YDVGRAIGKG…IQNVLAHRWM (252 aa). Residues 24–32 and Lys47 contribute to the ATP site; that span reads IGKGNFATV. Catalysis depends on Asp140, which acts as the Proton acceptor. A disordered region spans residues 383 to 412; the sequence is LSSPDCDSDDSSNSDLCDESPLSSLEPNHK. Residues 388–400 show a composition bias toward acidic residues; the sequence is CDSDDSSNSDLCD.

It belongs to the protein kinase superfamily. CAMK Ser/Thr protein kinase family. SNF1 subfamily. Interacts with tax-6. It depends on Mg(2+) as a cofactor. Autophosphorylated. Elevated cAMP levels appears to act via PKA to directly or indirectly phosphorylate multiple sites on kin-29 and inhibit function.

The protein localises to the cytoplasm. Its subcellular location is the nucleus. The catalysed reaction is L-seryl-[protein] + ATP = O-phospho-L-seryl-[protein] + ADP + H(+). The enzyme catalyses L-threonyl-[protein] + ATP = O-phospho-L-threonyl-[protein] + ADP + H(+). Regulates chemoreceptor expression by phosphorylating the hda-4 class II histone deacetylase (HDAC) and inhibiting the gene repression functions of hda-4 and the mef-2 transcription factor, enabling the correct sensing and transduction of food signals. Role in determining body size, the dauer decision and serotonin-mediated egg laying. May modulate the Sma/Mab pathway and regulates development in the later larval stages. The polypeptide is Serine/threonine-protein kinase kin-29 (Caenorhabditis briggsae).